The chain runs to 699 residues: Elongation factor G (699 aa).

Residues 8–288 (EDYRNFGIMA…AVVDYLPSPL (281 aa)) enclose the tr-type G domain. GTP is bound by residues 17–24 (AHIDAGKT), 86–90 (DTPGH), and 140–143 (NKMD).

The protein belongs to the TRAFAC class translation factor GTPase superfamily. Classic translation factor GTPase family. EF-G/EF-2 subfamily.

It localises to the cytoplasm. Its function is as follows. Catalyzes the GTP-dependent ribosomal translocation step during translation elongation. During this step, the ribosome changes from the pre-translocational (PRE) to the post-translocational (POST) state as the newly formed A-site-bound peptidyl-tRNA and P-site-bound deacylated tRNA move to the P and E sites, respectively. Catalyzes the coordinated movement of the two tRNA molecules, the mRNA and conformational changes in the ribosome. The polypeptide is Elongation factor G (Rhizobium etli (strain ATCC 51251 / DSM 11541 / JCM 21823 / NBRC 15573 / CFN 42)).